We begin with the raw amino-acid sequence, 169 residues long: Small ribosomal subunit protein uS9 (169 aa).

Disordered regions lie at residues 1 to 29 (MVEP…TETP) and 128 to 169 (MDPE…YSKR). The span at 9-21 (DVQEYDENSEEYP) shows a compositional bias: acidic residues. A compositionally biased stretch (basic residues) spans 150–169 (VERKKAGLKKARKAPQYSKR).

The protein belongs to the universal ribosomal protein uS9 family.

The protein is Small ribosomal subunit protein uS9 of Thermobifida fusca (strain YX).